Consider the following 265-residue polypeptide: F-box only protein 6 (265 aa).

Residues 3–50 enclose the F-box domain; it reads LVSINQLPENILLEVFMHVPARQLLRNCRPVCCLWRDLIDLVSLWKRK. An FBA domain is found at 71 to 252; that stretch reads FYFLCSLRRN…VTNSSVVISH (182 aa). At S251 the chain carries Phosphoserine.

As to quaternary structure, part of a SCF (SKP1-cullin-F-box) protein ligase complex. Interacts with VCP, CHEK1 and CUL1.

It localises to the cytoplasm. It functions in the pathway protein modification; protein ubiquitination. Functionally, substrate-recognition component of some SCF (SKP1-CUL1-F-box protein)-type E3 ubiquitin ligase complexes. Involved in endoplasmic reticulum-associated degradation pathway (ERAD) for misfolded lumenal proteins by recognizing and binding sugar chains on unfolded glycoproteins that are retrotranslocated into the cytosol and promoting their ubiquitination and subsequent degradation. Able to recognize and bind denatured glycoproteins, which are modified with not only high-mannose but also complex-type oligosaccharides. Also recognizes sulfated glycans. Also involved in DNA damage response by specifically recognizing activated CHEK1 (phosphorylated on 'Ser-345'), promoting its ubiquitination and degradation. Ubiquitination of CHEK1 is required to ensure that activated CHEK1 does not accumulate as cells progress through S phase, or when replication forks encounter transient impediments during normal DNA replication. The chain is F-box only protein 6 (FBXO6) from Bos taurus (Bovine).